We begin with the raw amino-acid sequence, 375 residues long: Glutamate 5-kinase (375 aa).

An ATP-binding site is contributed by K17. Residues S57, D144, and N156 each coordinate substrate. ATP is bound at residue 176–177 (TD). The region spanning 283–361 (KGELILDTGA…DEIEGILGYV (79 aa)) is the PUA domain.

This sequence belongs to the glutamate 5-kinase family.

Its subcellular location is the cytoplasm. It catalyses the reaction L-glutamate + ATP = L-glutamyl 5-phosphate + ADP. It participates in amino-acid biosynthesis; L-proline biosynthesis; L-glutamate 5-semialdehyde from L-glutamate: step 1/2. In terms of biological role, catalyzes the transfer of a phosphate group to glutamate to form L-glutamate 5-phosphate. This chain is Glutamate 5-kinase, found in Thioalkalivibrio sulfidiphilus (strain HL-EbGR7).